Reading from the N-terminus, the 78-residue chain is Putative DPH3 homolog B (78 aa).

Residues 4 to 60 (FHDEVEIEDFQYDEDSETYFCPCPCGDNFSITKEELENGEGVAMCPGCSLIIKVIYD) form the DPH-type MB domain. Zn(2+)-binding residues include Cys26, Cys28, Cys48, and Cys51.

The protein belongs to the DPH3 family.

The polypeptide is Putative DPH3 homolog B (DPH3P1) (Homo sapiens (Human)).